The following is a 421-amino-acid chain: Autophagy-related protein 17 (421 aa).

The protein belongs to the ATG17 family. As to quaternary structure, forms a complex with ATG13, ATG29 and CIS1/ATG31. The ATG17-ATG29-ATG31 complex interacts with the ATG1-ATG13 complex. Forms a complex with SNX4 and ATG20. Interacts with ATG11.

The protein resides in the cytoplasm. It localises to the preautophagosomal structure membrane. Functionally, autophagy-specific protein that functions with ATG13, ATG29, and CIS1/ATG31 in response to autophagy-inducing signals as a scaffold to recruit other ATG proteins to organize pre-autophagosomal structure (PAS) formation. Modulates the timing and magnitude of the autophagy response, such as the size of the sequestering vesicles, through interacting with and regulating ATG1 kinase activity. Plays particularly a role in pexophagy and nucleophagy. With ATG13, is required for ATG1 activation by autophosphorylation. Recruits ATG9 to the pre-autophagosomal structure. This is Autophagy-related protein 17 from Kluyveromyces marxianus (strain DMKU3-1042 / BCC 29191 / NBRC 104275) (Yeast).